A 158-amino-acid chain; its full sequence is 6,7-dimethyl-8-ribityllumazine synthase (158 aa).

Residues phenylalanine 22, 57-59 (AVE), and 81-83 (AVI) contribute to the 5-amino-6-(D-ribitylamino)uracil site. A (2S)-2-hydroxy-3-oxobutyl phosphate-binding site is contributed by 86-87 (GT). Histidine 89 acts as the Proton donor in catalysis. Phenylalanine 114 contributes to the 5-amino-6-(D-ribitylamino)uracil binding site. Arginine 128 provides a ligand contact to (2S)-2-hydroxy-3-oxobutyl phosphate.

Belongs to the DMRL synthase family. As to quaternary structure, forms an icosahedral capsid composed of 60 subunits, arranged as a dodecamer of pentamers.

The catalysed reaction is (2S)-2-hydroxy-3-oxobutyl phosphate + 5-amino-6-(D-ribitylamino)uracil = 6,7-dimethyl-8-(1-D-ribityl)lumazine + phosphate + 2 H2O + H(+). It participates in cofactor biosynthesis; riboflavin biosynthesis; riboflavin from 2-hydroxy-3-oxobutyl phosphate and 5-amino-6-(D-ribitylamino)uracil: step 1/2. In terms of biological role, catalyzes the formation of 6,7-dimethyl-8-ribityllumazine by condensation of 5-amino-6-(D-ribitylamino)uracil with 3,4-dihydroxy-2-butanone 4-phosphate. This is the penultimate step in the biosynthesis of riboflavin. The chain is 6,7-dimethyl-8-ribityllumazine synthase from Shewanella piezotolerans (strain WP3 / JCM 13877).